We begin with the raw amino-acid sequence, 106 residues long: Aspartyl/glutamyl-tRNA(Asn/Gln) amidotransferase subunit C (106 aa).

It belongs to the GatC family. As to quaternary structure, heterotrimer of A, B and C subunits.

It carries out the reaction L-glutamyl-tRNA(Gln) + L-glutamine + ATP + H2O = L-glutaminyl-tRNA(Gln) + L-glutamate + ADP + phosphate + H(+). The catalysed reaction is L-aspartyl-tRNA(Asn) + L-glutamine + ATP + H2O = L-asparaginyl-tRNA(Asn) + L-glutamate + ADP + phosphate + 2 H(+). In terms of biological role, allows the formation of correctly charged Asn-tRNA(Asn) or Gln-tRNA(Gln) through the transamidation of misacylated Asp-tRNA(Asn) or Glu-tRNA(Gln) in organisms which lack either or both of asparaginyl-tRNA or glutaminyl-tRNA synthetases. The reaction takes place in the presence of glutamine and ATP through an activated phospho-Asp-tRNA(Asn) or phospho-Glu-tRNA(Gln). This chain is Aspartyl/glutamyl-tRNA(Asn/Gln) amidotransferase subunit C, found in Lactiplantibacillus plantarum (strain ATCC BAA-793 / NCIMB 8826 / WCFS1) (Lactobacillus plantarum).